The sequence spans 143 residues: Insertion element IS2 uncharacterized 16.4 kDa protein (143 aa).

The chain is Insertion element IS2 uncharacterized 16.4 kDa protein from Escherichia coli.